The following is a 135-amino-acid chain: Small ribosomal subunit protein eS6 (135 aa).

The protein belongs to the eukaryotic ribosomal protein eS6 family.

The sequence is that of Small ribosomal subunit protein eS6 from Halorubrum lacusprofundi (strain ATCC 49239 / DSM 5036 / JCM 8891 / ACAM 34).